Here is a 205-residue protein sequence, read N- to C-terminus: Small ribosomal subunit protein uS4 (205 aa).

The interval 25–48 (KTIEARPTPPGQHGAKNTRRKKSD) is disordered. Residues 94 to 157 (RRLDNVVFRA…TKLPIVVETL (64 aa)) form the S4 RNA-binding domain.

Belongs to the universal ribosomal protein uS4 family. Part of the 30S ribosomal subunit. Contacts protein S5. The interaction surface between S4 and S5 is involved in control of translational fidelity.

Its function is as follows. One of the primary rRNA binding proteins, it binds directly to 16S rRNA where it nucleates assembly of the body of the 30S subunit. Functionally, with S5 and S12 plays an important role in translational accuracy. This chain is Small ribosomal subunit protein uS4, found in Methylobacillus flagellatus (strain ATCC 51484 / DSM 6875 / VKM B-1610 / KT).